The following is a 310-amino-acid chain: MNDLMTKSFMSYVDLKKAAMKDMEAGPDFDLEMASTKADKMDENLSSFLEEAEYVKAEMGLISETLARIEQYHEESKGVHKAESVKSLRNKISNEIVSGLRKAKSIKSKLEEMDKANKEIKRLSGTPVYRSRTAVTNGLRKKLKEVMMEFQGLRQKMMSEYKETVERRYFTVTGEHANDEMIEKIITDNAGGEEFLTRAIQEHGKGKVLETVVEIQDRYDAAKEIEKSLLELHQVFLDMAVMVESQGEQMDEIEHHVINASHYVADGANELKTAKSHQRNSRKWMCIGIIVLLLIILIVVIPIITSFSSS.

N-acetylmethionine is present on Met1. The Cytoplasmic segment spans residues 1–283 (MNDLMTKSFM…AKSHQRNSRK (283 aa)). Positions 94–159 (NEIVSGLRKA…FQGLRQKMMS (66 aa)) form a coiled coil. The t-SNARE coiled-coil homology domain maps to 212–274 (VVEIQDRYDA…ADGANELKTA (63 aa)). The chain crosses the membrane as a helical; Anchor for type IV membrane protein span at residues 284 to 304 (WMCIGIIVLLLIILIVVIPII). The Vesicular portion of the chain corresponds to 305-310 (TSFSSS).

Belongs to the syntaxin family. As to quaternary structure, interacts with SNAP33 and/or NPSN11 to form a t-SNARE complex and with KEULE. Abundant in flowers and developing siliques. A low level expression is seen in the seedlings, roots, and leaves.

It localises to the membrane. Its function is as follows. Involved in cytokinesis. Acts as a cell plate-specific syntaxin, required for the fusion of vesicles at the plane of cell division. This Arabidopsis thaliana (Mouse-ear cress) protein is Syntaxin-related protein KNOLLE (KN).